Here is a 439-residue protein sequence, read N- to C-terminus: Acetyl esterase Axe7A (439 aa).

The first 31 residues, 1 to 31 (MFNFAPKQTTEMKKLLFTLVFVLGSMATALA), serve as a signal peptide directing secretion. Serine 309 functions as the Nucleophile in the catalytic mechanism. Residues aspartate 391 and histidine 420 each act as charge relay system in the active site.

It belongs to the carbohydrate esterase 7 family.

The protein operates within glycan degradation; xylan degradation. Involved in degradation of plant cell wall polysaccharides. Has acetyl esterase activity towards a broad range of substrates including xylose-tetraacetate, 4-O-methylumbelliferyl acetate, glucose-pentaacetate, cephalosporin C, and acetylated xylo-oligosaccharides smaller than xylo-heptaose. Displays no detectable activity on polymeric acetylated xylan. The polypeptide is Acetyl esterase Axe7A (Xylanibacter ruminicola (strain ATCC 19189 / DSM 19721 / CIP 105475 / JCM 8958 / 23) (Prevotella ruminicola)).